A 317-amino-acid chain; its full sequence is Probable cell division protein WhiA (317 aa).

The H-T-H motif DNA-binding region spans 267–300 (SLKELGEMLHPPVGKSGVNHRLRRLELIARQVRG).

It belongs to the WhiA family.

Functionally, involved in cell division and chromosome segregation. In Moorella thermoacetica (strain ATCC 39073 / JCM 9320), this protein is Probable cell division protein WhiA.